Consider the following 157-residue polypeptide: Endoribonuclease YbeY (157 aa).

Residues His-114, His-118, and His-124 each coordinate Zn(2+).

It belongs to the endoribonuclease YbeY family. The cofactor is Zn(2+).

It localises to the cytoplasm. In terms of biological role, single strand-specific metallo-endoribonuclease involved in late-stage 70S ribosome quality control and in maturation of the 3' terminus of the 16S rRNA. This is Endoribonuclease YbeY from Caulobacter vibrioides (strain ATCC 19089 / CIP 103742 / CB 15) (Caulobacter crescentus).